The sequence spans 221 residues: Oligoribonuclease (221 aa).

An Exonuclease domain is found at Leu-21–Leu-186. Residue Tyr-143 is part of the active site.

It belongs to the oligoribonuclease family.

The protein localises to the cytoplasm. Its function is as follows. 3'-to-5' exoribonuclease specific for small oligoribonucleotides. This is Oligoribonuclease from Corynebacterium efficiens (strain DSM 44549 / YS-314 / AJ 12310 / JCM 11189 / NBRC 100395).